The sequence spans 561 residues: Putative transport protein DNO_0009 (561 aa).

Transmembrane regions (helical) follow at residues Val4 to Ile24, Val29 to Leu49, Phe74 to Ser94, Ala104 to Phe124, and Met166 to Ile186. 2 RCK C-terminal domains span residues Leu198–Glu283 and Ala285–Asn369. A run of 6 helical transmembrane segments spans residues Met379 to Leu399, Ala411 to Phe433, Ile447 to Leu467, Phe472 to Ile492, Tyr501 to Ala521, and Val538 to Trp558.

This sequence belongs to the AAE transporter (TC 2.A.81) family. YidE subfamily.

It localises to the cell membrane. This is Putative transport protein DNO_0009 from Dichelobacter nodosus (strain VCS1703A).